Reading from the N-terminus, the 858-residue chain is Envelope glycoprotein gp160 (858 aa).

An N-terminal signal peptide occupies residues M1–C19. Residues T20–Y679 are Extracellular-facing. Residue N34 is glycosylated (N-linked (GlcNAc...) asparagine; by host). A disulfide bridge connects residues C41 and C54. 26 N-linked (GlcNAc...) asparagine; by host glycosylation sites follow: N67, N76, N119, N120, N151, N166, N179, N192, N193, N196, N206, N238, N241, N248, N272, N278, N289, N300, N310, N367, N371, N400, N410, N447, N463, and N466. 5 disulfide bridges follow: C98-C214, C105-C205, C110-C163, C227-C257, and C237-C249. Residues C110–N162 form a V1 region. Over residues S111 to T134 the composition is skewed to low complexity. Residues S111–E142 are disordered. Residues C163–C205 form a V2 region. Residues C305 to W339 are V3. C305 and C340 are joined by a disulfide. 2 cysteine pairs are disulfide-bonded: C392/C446 and C399/C419. A V4 region spans residues C399–C419. Residues N462 to F469 are V5. The segment at G512 to A532 is fusion peptide. Residues L575 to R591 form an immunosuppression region. N611, N620, and N636 each carry an N-linked (GlcNAc...) asparagine; by host glycan. The stretch at Q624 to Q645 forms a coiled coil. The segment at K657–Q678 is MPER; binding to GalCer. Residues G680 to L700 traverse the membrane as a helical segment. Topologically, residues S701–L858 are cytoplasmic. A YXXV motif; contains endocytosis signal motif is present at residues Y707–V710. C773 is lipidated: S-palmitoyl cysteine; by host. The Di-leucine internalization motif motif lies at L857 to L858.

As to quaternary structure, the mature envelope protein (Env) consists of a homotrimer of non-covalently associated gp120-gp41 heterodimers. The resulting complex protrudes from the virus surface as a spike. There seems to be as few as 10 spikes on the average virion. Interacts with human CD4, CCR5 and CXCR4, to form a P4HB/PDI-CD4-CXCR4-gp120 complex. Gp120 also interacts with the C-type lectins CD209/DC-SIGN and CLEC4M/DC-SIGNR (collectively referred to as DC-SIGN(R)). Gp120 and gp41 interact with GalCer. The mature envelope protein (Env) consists of a homotrimer of non-covalently associated gp120-gp41 heterodimers. The resulting complex protrudes from the virus surface as a spike. There seems to be as few as 10 spikes on the average virion. Specific enzymatic cleavages in vivo yield mature proteins. Envelope glycoproteins are synthesized as an inactive precursor that is heavily N-glycosylated and processed likely by host cell furin in the Golgi to yield the mature SU and TM proteins. The cleavage site between SU and TM requires the minimal sequence [KR]-X-[KR]-R. Post-translationally, palmitoylation of the transmembrane protein and of Env polyprotein (prior to its proteolytic cleavage) is essential for their association with host cell membrane lipid rafts. Palmitoylation is therefore required for envelope trafficking to classical lipid rafts, but not for viral replication.

The protein resides in the virion membrane. The protein localises to the host cell membrane. It is found in the host endosome membrane. In terms of biological role, the surface protein gp120 (SU) attaches the virus to the host lymphoid cell by binding to the primary receptor CD4. This interaction induces a structural rearrangement creating a high affinity binding site for a chemokine coreceptor like CXCR4 and/or CCR5. This peculiar 2 stage receptor-interaction strategy allows gp120 to maintain the highly conserved coreceptor-binding site in a cryptic conformation, protected from neutralizing antibodies. Since CD4 also displays a binding site for the disulfide-isomerase P4HB/PDI, a P4HB/PDI-CD4-CXCR4-gp120 complex may form. In that complex, P4HB/PDI could reach and reduce gp120 disulfide bonds, causing major conformational changes in gp120. TXN, another PDI family member could also be involved in disulfide rearrangements in Env during fusion. These changes are transmitted to the transmembrane protein gp41 and are thought to activate its fusogenic potential by unmasking its fusion peptide. Its function is as follows. The surface protein gp120 is a ligand for CD209/DC-SIGN and CLEC4M/DC-SIGNR, which are respectively found on dendritic cells (DCs), and on endothelial cells of liver sinusoids and lymph node sinuses. These interactions allow capture of viral particles at mucosal surfaces by these cells and subsequent transmission to permissive cells. DCs are professional antigen presenting cells, critical for host immunity by inducing specific immune responses against a broad variety of pathogens. They act as sentinels in various tissues where they take up antigen, process it, and present it to T-cells following migration to lymphoid organs. HIV subverts the migration properties of dendritic cells to gain access to CD4+ T-cells in lymph nodes. Virus transmission to permissive T-cells occurs either in trans (without DCs infection, through viral capture and transmission), or in cis (following DCs productive infection, through the usual CD4-gp120 interaction), thereby inducing a robust infection. In trans infection, bound virions remain infectious over days and it is proposed that they are not degraded, but protected in non-lysosomal acidic organelles within the DCs close to the cell membrane thus contributing to the viral infectious potential during DCs' migration from the periphery to the lymphoid tissues. On arrival at lymphoid tissues, intact virions recycle back to DCs' cell surface allowing virus transmission to CD4+ T-cells. Virion capture also seems to lead to MHC-II-restricted viral antigen presentation, and probably to the activation of HIV-specific CD4+ cells. Functionally, the transmembrane protein gp41 (TM) acts as a class I viral fusion protein. Under the current model, the protein has at least 3 conformational states: pre-fusion native state, pre-hairpin intermediate state, and post-fusion hairpin state. During fusion of viral and target intracellular membranes, the coiled coil regions (heptad repeats) assume a trimer-of-hairpins structure, positioning the fusion peptide in close proximity to the C-terminal region of the ectodomain. The formation of this structure appears to drive apposition and subsequent fusion of viral and target cell membranes. Complete fusion occurs in host cell endosomes and is dynamin-dependent, however some lipid transfer might occur at the plasma membrane. The virus undergoes clathrin-dependent internalization long before endosomal fusion, thus minimizing the surface exposure of conserved viral epitopes during fusion and reducing the efficacy of inhibitors targeting these epitopes. Membranes fusion leads to delivery of the nucleocapsid into the cytoplasm. The envelope glycoprotein gp160 precursor down-modulates cell surface CD4 antigen by interacting with it in the endoplasmic reticulum and blocking its transport to the cell surface. In terms of biological role, the gp120-gp41 heterodimer seems to contribute to T-cell depletion during HIV-1 infection. The envelope glycoproteins expressed on the surface of infected cells induce apoptosis through an interaction with uninfected cells expressing the receptor (CD4) and the coreceptors CXCR4 or CCR5. This type of bystander killing may be obtained by at least three distinct mechanisms. First, the interaction between the 2 cells can induce cellular fusion followed by nuclear fusion within the syncytium. Syncytia are condemned to die from apoptosis. Second, the 2 interacting cells may not fuse entirely and simply exchange plasma membrane lipids, after a sort of hemifusion process, followed by rapid death. Third, it is possible that virus-infected cells, on the point of undergoing apoptosis, fuse with CD4-expressing cells, in which case apoptosis is rapidly transmitted from one cell to the other and thus occurs in a sort of contagious fashion. Its function is as follows. The gp120-gp41 heterodimer allows rapid transcytosis of the virus through CD4 negative cells such as simple epithelial monolayers of the intestinal, rectal and endocervical epithelial barriers. Both gp120 and gp41 specifically recognize glycosphingolipids galactosyl-ceramide (GalCer) or 3' sulfo-galactosyl-ceramide (GalS) present in the lipid rafts structures of epithelial cells. Binding to these alternative receptors allows the rapid transcytosis of the virus through the epithelial cells. This transcytotic vesicle-mediated transport of virions from the apical side to the basolateral side of the epithelial cells does not involve infection of the cells themselves. The sequence is that of Envelope glycoprotein gp160 (env) from Homo sapiens (Human).